We begin with the raw amino-acid sequence, 145 residues long: Large ribosomal subunit protein uL16 (145 aa).

Residues 1–17 are compositionally biased toward basic residues; that stretch reads MLMPKRVKHRKVQRGRM. Positions 1 to 20 are disordered; the sequence is MLMPKRVKHRKVQRGRMKGV.

It belongs to the universal ribosomal protein uL16 family. As to quaternary structure, part of the 50S ribosomal subunit.

Binds 23S rRNA and is also seen to make contacts with the A and possibly P site tRNAs. The protein is Large ribosomal subunit protein uL16 of Acetivibrio thermocellus (strain ATCC 27405 / DSM 1237 / JCM 9322 / NBRC 103400 / NCIMB 10682 / NRRL B-4536 / VPI 7372) (Clostridium thermocellum).